Here is a 1088-residue protein sequence, read N- to C-terminus: Methionine S-methyltransferase (1088 aa).

The protein belongs to the class I-like SAM-binding methyltransferase superfamily. In terms of assembly, homotetramer. In terms of tissue distribution, expressed in the shoot, scutellum, and aleurone cells but not in the root or endosperm.

It is found in the cytoplasm. It carries out the reaction L-methionine + S-adenosyl-L-methionine = S-methyl-L-methionine + S-adenosyl-L-homocysteine. Functionally, catalyzes the S-methylmethionine (SMM) biosynthesis from adenosyl-L-homocysteine (AdoMet) and methionine. SMM biosynthesis (by MMT1) and degradation (by HMT-1, HMT-2 and HMT-3) constitute the SMM cycle in plants, which is probably required to achieve short term control of AdoMet level. Also able to catalyze the selenium-methylmethionine (SeMM) from AdoMet and selenium-methionine (SeMet). May play a role in phoem sulfur transport; such function is however not essential. In Hordeum vulgare (Barley), this protein is Methionine S-methyltransferase (MMT1).